A 427-amino-acid polypeptide reads, in one-letter code: MSAKWEKKGTNDGVLTFSIEQAVIEKGLTQAFNKVKKNLNVPGFRKGKVSRTVFNRMYGEEALYEDALNAVLPEAYEAAVLEAGIEPVAQPKIDVESMNKGEDWVITAEVTVKPEVKLGEYKNLTVSKQDREVTDEDVEARLKREQESQAELVIKEDAAAENGDTVVIDFEGFLGDEAFEGGKGENYSLELGSNSFIPGFEDQLVGKKAGEEVEVNVTFPEDYQAEDLAGKEAVFKVTVHEVKAKELPELDDEFAKDVDDSVESLDELKEKFRKELTEAKEAAAEEAKDEEAIRLAVENAEIVELPHVMVHDEVHRSMDEFLNNMQRQGISPEMYYQLTGSTEEDLHKQFEGEAETRTKTNLVIEAVAKAENIEVTQEDIDAEVKDLAEQYNMPEAQVRKVLNNDMLEHDIRMKRAVETITETAVEK.

A PPIase FKBP-type domain is found at 163 to 248 (GDTVVIDFEG…VHEVKAKELP (86 aa)).

Belongs to the FKBP-type PPIase family. Tig subfamily.

The protein resides in the cytoplasm. The catalysed reaction is [protein]-peptidylproline (omega=180) = [protein]-peptidylproline (omega=0). Functionally, involved in protein export. Acts as a chaperone by maintaining the newly synthesized protein in an open conformation. Functions as a peptidyl-prolyl cis-trans isomerase. This chain is Trigger factor, found in Enterococcus faecalis (strain ATCC 700802 / V583).